The following is a 255-amino-acid chain: Alpha-acetolactate decarboxylase (255 aa).

Belongs to the alpha-acetolactate decarboxylase family.

It catalyses the reaction (2S)-2-acetolactate + H(+) = (R)-acetoin + CO2. It functions in the pathway polyol metabolism; (R,R)-butane-2,3-diol biosynthesis; (R,R)-butane-2,3-diol from pyruvate: step 2/3. Functionally, converts acetolactate into acetoin, which can be excreted by the cells. This may be a mechanism for controlling the internal pH of cells in the stationary stage. In Bacillus subtilis (strain 168), this protein is Alpha-acetolactate decarboxylase (alsD).